A 759-amino-acid polypeptide reads, in one-letter code: Protein AKNAD1 (759 aa).

Positions 169–246 (TDQLNPKKDG…HTEKASSGNR (78 aa)) are disordered. The span at 181 to 192 (SNKPGSPTMTEE) shows a compositional bias: polar residues. A coiled-coil region spans residues 371 to 482 (QKISQGKQMC…EDVKDKVDES (112 aa)). Residues 484 to 496 (YTSAPSLPVSSPV) are compositionally biased toward polar residues. Disordered stretches follow at residues 484-543 (YTSA…QEAP), 634-654 (EKAPHSDSTPNSDTGHSFCSD), 678-723 (CRKE…PSLA), and 735-759 (PDTSKSSPTPGWQEAELGLENMKSQ). Positions 497-509 (TLDDLASTSSSLS) are enriched in low complexity. Over residues 639 to 654 (SDSTPNSDTGHSFCSD) the composition is skewed to polar residues. Positions 679 to 688 (RKEPPKEFHY) are enriched in basic and acidic residues. Polar residues predominate over residues 735–744 (PDTSKSSPTP).

It belongs to the AKNA family.

The sequence is that of Protein AKNAD1 (AKNAD1) from Macaca fascicularis (Crab-eating macaque).